The primary structure comprises 426 residues: Histidine--tRNA ligase (426 aa).

This sequence belongs to the class-II aminoacyl-tRNA synthetase family. As to quaternary structure, homodimer.

The protein resides in the cytoplasm. It carries out the reaction tRNA(His) + L-histidine + ATP = L-histidyl-tRNA(His) + AMP + diphosphate + H(+). The protein is Histidine--tRNA ligase of Colwellia psychrerythraea (strain 34H / ATCC BAA-681) (Vibrio psychroerythus).